The chain runs to 478 residues: BTB/POZ domain-containing protein 17 (478 aa).

An N-terminal signal peptide occupies residues 1–28; it reads MPRRGYSKPGSWGSFWAMLTLVGLVTHA. N-linked (GlcNAc...) asparagine glycosylation is found at Asn-61, Asn-100, and Asn-195. The BTB domain occupies 63–132; sequence SDVVLRVQAA…LYCGELTVLL (70 aa). The BACK domain maps to 169-269; it reads AVGWYHYAVG…IPPAQLFQLQ (101 aa).

The protein localises to the secreted. The protein is BTB/POZ domain-containing protein 17 (BTBD17) of Homo sapiens (Human).